Reading from the N-terminus, the 218-residue chain is Octanoyltransferase (218 aa).

The 176-residue stretch at 34-209 (ETSRDELWIV…TFSQELGYQH (176 aa)) folds into the BPL/LPL catalytic domain. Substrate-binding positions include 73–80 (RGGQVTYH), 140–142 (SLG), and 153–155 (GLA). The active-site Acyl-thioester intermediate is Cys-171.

Belongs to the LipB family.

The protein localises to the cytoplasm. It carries out the reaction octanoyl-[ACP] + L-lysyl-[protein] = N(6)-octanoyl-L-lysyl-[protein] + holo-[ACP] + H(+). It participates in protein modification; protein lipoylation via endogenous pathway; protein N(6)-(lipoyl)lysine from octanoyl-[acyl-carrier-protein]: step 1/2. In terms of biological role, catalyzes the transfer of endogenously produced octanoic acid from octanoyl-acyl-carrier-protein onto the lipoyl domains of lipoate-dependent enzymes. Lipoyl-ACP can also act as a substrate although octanoyl-ACP is likely to be the physiological substrate. This chain is Octanoyltransferase, found in Shewanella loihica (strain ATCC BAA-1088 / PV-4).